A 389-amino-acid chain; its full sequence is Phosphopentomutase (389 aa).

Mn(2+)-binding residues include D9, D282, H287, D323, H324, and H335.

It belongs to the phosphopentomutase family. The cofactor is Mn(2+).

It is found in the cytoplasm. It carries out the reaction 2-deoxy-alpha-D-ribose 1-phosphate = 2-deoxy-D-ribose 5-phosphate. It catalyses the reaction alpha-D-ribose 1-phosphate = D-ribose 5-phosphate. It participates in carbohydrate degradation; 2-deoxy-D-ribose 1-phosphate degradation; D-glyceraldehyde 3-phosphate and acetaldehyde from 2-deoxy-alpha-D-ribose 1-phosphate: step 1/2. Its function is as follows. Isomerase that catalyzes the conversion of deoxy-ribose 1-phosphate (dRib-1-P) and ribose 1-phosphate (Rib-1-P) to deoxy-ribose 5-phosphate (dRib-5-P) and ribose 5-phosphate (Rib-5-P), respectively. The polypeptide is Phosphopentomutase (Pseudothermotoga lettingae (strain ATCC BAA-301 / DSM 14385 / NBRC 107922 / TMO) (Thermotoga lettingae)).